Here is a 563-residue protein sequence, read N- to C-terminus: Zinc finger protein 503 (563 aa).

The segment covering 1 to 10 has biased composition (polar residues); it reads MITSPSASRN. Disordered regions lie at residues 1 to 48 and 101 to 226; these read MITS…PLRQ and SQIG…TSVS. Composition is skewed to low complexity over residues 19–33 and 112–122; these read SSSSSSRNNSSAVAS and SKLSSVTSNGS. A compositionally biased stretch (polar residues) spans 174-194; it reads ATCQPFTPRTGSPNSSTSASP. A compositionally biased stretch (basic and acidic residues) spans 199–211; the sequence is GKGERDEKKDSDC. The segment covering 212–226 has biased composition (polar residues); that stretch reads NKNCSSDGSAPTSVS. The C2H2-type zinc-finger motif lies at 431 to 459; that stretch reads HVCNWVSANGPCDKRFSSSEELLNHLRTH.

Belongs to the Elbow/Noc family. Interacts with nlz1.

The protein resides in the nucleus. Its function is as follows. Required for segmental gene expression during hindbrain development. May function as a transcriptional repressor. The protein is Zinc finger protein 503 (znf503) of Danio rerio (Zebrafish).